The sequence spans 223 residues: Serine/threonine/tyrosine-interacting protein A (223 aa).

The 149-residue stretch at 28 to 176 (EMQEILPGLF…LQEYEAIYLA (149 aa)) folds into the Tyrosine-protein phosphatase domain.

This sequence belongs to the protein-tyrosine phosphatase family. Non-receptor class subfamily.

Functionally, catalytically inactive phosphatase. The protein is Serine/threonine/tyrosine-interacting protein A (styx-a) of Xenopus laevis (African clawed frog).